A 413-amino-acid chain; its full sequence is GTPase HflX (413 aa).

The Hflx-type G domain occupies 200 to 386 (VRVALVGYTN…KVYETVREIH (187 aa)). GTP-binding positions include 206–213 (GYTNVGKS), 231–235 (FATLD), 252–255 (DTVG), 318–321 (NKID), and 364–366 (SAT). Mg(2+) is bound by residues S213 and T233.

The protein belongs to the TRAFAC class OBG-HflX-like GTPase superfamily. HflX GTPase family. As to quaternary structure, monomer. Associates with the 50S ribosomal subunit. Mg(2+) is required as a cofactor.

The protein resides in the cytoplasm. Its function is as follows. GTPase that associates with the 50S ribosomal subunit and may have a role during protein synthesis or ribosome biogenesis. The sequence is that of GTPase HflX from Flavobacterium psychrophilum (strain ATCC 49511 / DSM 21280 / CIP 103535 / JIP02/86).